The sequence spans 199 residues: NADH-quinone oxidoreductase subunit B 2 (199 aa).

[4Fe-4S] cluster contacts are provided by Cys-78, Cys-79, Cys-143, and Cys-173.

This sequence belongs to the complex I 20 kDa subunit family. In terms of assembly, NDH-1 is composed of 14 different subunits. Subunits NuoB, C, D, E, F, and G constitute the peripheral sector of the complex. The cofactor is [4Fe-4S] cluster.

Its subcellular location is the cell inner membrane. It carries out the reaction a quinone + NADH + 5 H(+)(in) = a quinol + NAD(+) + 4 H(+)(out). In terms of biological role, NDH-1 shuttles electrons from NADH, via FMN and iron-sulfur (Fe-S) centers, to quinones in the respiratory chain. The immediate electron acceptor for the enzyme in this species is believed to be ubiquinone. Couples the redox reaction to proton translocation (for every two electrons transferred, four hydrogen ions are translocated across the cytoplasmic membrane), and thus conserves the redox energy in a proton gradient. This chain is NADH-quinone oxidoreductase subunit B 2, found in Rhodopseudomonas palustris (strain BisB5).